Consider the following 103-residue polypeptide: Large ribosomal subunit protein bL21 (103 aa).

It belongs to the bacterial ribosomal protein bL21 family. Part of the 50S ribosomal subunit. Contacts protein L20.

Functionally, this protein binds to 23S rRNA in the presence of protein L20. The sequence is that of Large ribosomal subunit protein bL21 from Delftia acidovorans (strain DSM 14801 / SPH-1).